A 661-amino-acid polypeptide reads, in one-letter code: MDVTEIAEQTLNTSCLSPACQQQDYAEIEKRYEAERHQQLQTRGKIPDVNIRTNTRFEQFSKDPWLDDSNKRQQIQYHQRRHNGKHHKVLIIGAGYGGLLFAVRIIQTGAFTADDILMVDTSGGFGGTWYWNRYPGLMCDVESYIYMPLLEETGYMPRAKYASGPELRVHAERIADTWKLSNRAMFGVTVKSLDWDEVGKHWSARGLVLDYEKDQSKKASLHLSADFVMLASGIFASPKIPDFTSILEYHGHMFHTSRWDYGCTGGSPENPKLCKLGDKKVGIIGTGATAIQVVPHLAQYSKELHVFQRTPSAVDKRDNHPTDPVWWNKMLQSEGPGWQKRRMENFNAFTGNEQPQPAVDMIADGWTSMPSFSIIGGSPESNATDYLHRMKAFDFPRQERIRARVRETVHNKEVAEALSPWYPGWCKRPCFHDHYLAAFNRPNVRLIDVRQSGIDHFTPKGLVADGREHEIDVFVFSTGYTTSRSSPGGRADIAITGRNGLTMEHKWQNGLATLHGVITRDFPNLFFPGPSQAGTCLNHTYTLDQLATHVAYIISKTLIKIGAADAGYSPRVVIEPTKEAEEDWAVQVLARAATHGALSQCTPGYYNRDGMASAMKSLSMEDKMKLGRMVSWGEGIGSYMDQIVNWRGQGELRGLEIHCVD.

An N-linked (GlcNAc...) asparagine glycan is attached at asparagine 12. Residues 89-111 (VLIIGAGYGGLLFAVRIIQTGAF) traverse the membrane as a helical segment. FAD is bound by residues 128–131 (TWYW), 140–141 (DV), and tyrosine 146. 138 to 140 (MCD) contacts NADP(+). Residues 286–292 (TGATAIQ) and 309–310 (RT) contribute to the NADP(+) site. Residues asparagine 382 and asparagine 538 are each glycosylated (N-linked (GlcNAc...) asparagine).

It belongs to the FAD-binding monooxygenase family. Requires FAD as cofactor.

Its subcellular location is the membrane. The catalysed reaction is chermesin D + AH2 + O2 = asnovolin I + A + H2O. It catalyses the reaction asnovolin J + AH2 + O2 = asnovolin A + A + H2O. It functions in the pathway secondary metabolite biosynthesis; terpenoid biosynthesis. Its function is as follows. Chermesin D/asnovolin J monooxidase; part of the gene cluster that mediates the biosynthesis of novofumigatonin, a heavily oxygenated meroterpenoid containing a unique orthoester moiety. The first step of the pathway is the synthesis of 3,5-dimethylorsellinic acid (DMOA) by the polyketide synthase nvfA via condensation of one acetyl-CoA starter unit with 3 malonyl-CoA units and 2 methylations. DMOA is then converted to farnesyl-DMOA by the farnesyltransferase nvfB. Epoxydation by FAD-dependent monooxygenase nvfK, followed by a protonation-initiated cyclization catalyzed by the terpene cyclase nvfL leads to the production of asnavolin H. The short chain dehydrogenase nvfC then as a 3-OH dehydrogenase of asnovolin H to yield chemesin D. There are two branches to synthesize asnovolin A from chemesin D. In one branch, chemesin D undergoes Baeyer-Villiger oxidation by nvfH, methylation by nvfJ, and enoyl reduction by the nvfM D enoylreductase that reduces the double bond between C-5'and C-6', to form respectively asnovolin I, asnovolin K, and asnovolin A. In the other branch, the methylation precedes the Baeyer-Villiger oxidation and the enoyl reduction to yield asnovolin A via the asnovolin J intermediate. Asnovolin A is further converted to fumigatonoid A by the Fe(II)/2-oxoglutarate-dependent dioxygenase nvfI that catalyzes an endoperoxidation reaction. The alpha/beta hydrolase nvfD then acts as an epimerase that converts fumigatonoid A to its C-5' epimer, which then undergoes spontaneous or nvfD-catalyzed lactonization. The following step utilizes the ketoreductase nvfG to produce fumigatonoid B. The dioxygenase nvfE further converts fumigatonoid B into fumigatonoid C. Finally the Fe(II)/2-oxoglutarate-dependent dioxygenase nvfF catalyzes two rounds of oxidation to transform fumigatonoid C into the end product, novofumigatonin A. The chain is Chermesin D/asnovolin J monooxidase nvfH from Aspergillus novofumigatus (strain IBT 16806).